We begin with the raw amino-acid sequence, 396 residues long: MAIRIKLKPGREKSLERRHPWVFSNAIHNIKGKPEAGETVDVVAHDGHWLGRGAWSPESQIQVRIWTFDREEEIDRAFFARRLQRAQIGRNDLIREQGLTGYRLVAAESDGLPGITIDRYANVLVCQLLSTGADLWRDTLVELLAEQYPDCAIYERSDVDSRKKEGLLPVTGLLHGTLPEMPVIIEENGIKIAVDVIKGHKTGFYLDQRDNRAIAARFVKDKSVLNCFCYTGTFGLYAAKAGAASIENVDVSSLALATARLNMQVNGLSDDNVHYNEADVFKLLRQYRDEGKTFDVIVLDPPKFADNKAQLNGACRGYKDINMIALQLLNPGGVLLTFSCSGLMPADLFQKIVADAALDAKREIQFIERLSQASDHPIGSAFPEGFYLKGLVARAW.

In terms of domain architecture, PUA spans 2-79 (AIRIKLKPGR…REEEIDRAFF (78 aa)).

The protein belongs to the methyltransferase superfamily. RlmI family.

It is found in the cytoplasm. The catalysed reaction is cytidine(1962) in 23S rRNA + S-adenosyl-L-methionine = 5-methylcytidine(1962) in 23S rRNA + S-adenosyl-L-homocysteine + H(+). Functionally, specifically methylates the cytosine at position 1962 (m5C1962) of 23S rRNA. This Shewanella putrefaciens (strain CN-32 / ATCC BAA-453) protein is Ribosomal RNA large subunit methyltransferase I.